Here is a 238-residue protein sequence, read N- to C-terminus: Uridylate kinase (238 aa).

Position 12-15 (lysine 12–glycine 15) interacts with ATP. Glycine 54 is a binding site for UMP. The ATP site is built by glycine 55 and arginine 59. UMP contacts are provided by residues aspartate 74 and threonine 135–threonine 142. Residues threonine 162, tyrosine 168, and aspartate 171 each coordinate ATP.

This sequence belongs to the UMP kinase family. Homohexamer.

It is found in the cytoplasm. It catalyses the reaction UMP + ATP = UDP + ADP. The protein operates within pyrimidine metabolism; CTP biosynthesis via de novo pathway; UDP from UMP (UMPK route): step 1/1. Inhibited by UTP. Catalyzes the reversible phosphorylation of UMP to UDP. This Azoarcus sp. (strain BH72) protein is Uridylate kinase.